A 504-amino-acid chain; its full sequence is Anaerobic nitric oxide reductase transcription regulator NorR (504 aa).

4-aspartylphosphate is present on Asp-57. The region spanning Met-187–Val-416 is the Sigma-54 factor interaction domain. ATP contacts are provided by residues Gly-215–Glu-222 and Ala-278–Glu-287. Positions Trp-479 to Lys-498 form a DNA-binding region, H-T-H motif.

Its pathway is nitrogen metabolism; nitric oxide reduction. Its function is as follows. Required for the expression of anaerobic nitric oxide (NO) reductase, acts as a transcriptional activator for at least the norVW operon. Activation also requires sigma-54. This is Anaerobic nitric oxide reductase transcription regulator NorR from Enterobacter sp. (strain 638).